Here is a 260-residue protein sequence, read N- to C-terminus: OCIA domain-containing protein 1 (260 aa).

Positions 1-110 constitute an OCIA domain; sequence MDSPLSDGSR…MRLPNSRLGE (110 aa). The disordered stretch occupies residues 146–260; it reads DVYTDEGLNP…KNKYGDSWQD (115 aa). Polar residues predominate over residues 155 to 164; that stretch reads PSRSTALNLD. Basic and acidic residues predominate over residues 205 to 215; sequence EDLRKKNREGY.

The protein belongs to the OCIAD1 family.

The chain is OCIA domain-containing protein 1 from Drosophila pseudoobscura pseudoobscura (Fruit fly).